The sequence spans 860 residues: Anoctamin-7 (860 aa).

The Cytoplasmic segment spans residues 1–297 (MLRKQAGEED…YFAWLGFYTG (297 aa)). Residues 24-50 (NGCSYGSTAQASEAGKQQVAPSRVGSS) are disordered. The helical transmembrane segment at 298–318 (WLLPAAVVGTVVFLAGCFLVF) threads the bilayer. Over 319-362 (SDVPTQELCHSSDTFDMCPLCSDCSFWLLSSACTLAQAGRLFDH) the chain is Extracellular. A helical membrane pass occupies residues 363-383 (GGTVFFSLFMALWAVLLLEYW). Topologically, residues 384–441 (KRKNATLAYRWDCSDYEDIEERPRPQFAATAPMTALNPITGEDEPYFPEKNRVRRMLA) are cytoplasmic. Residues 442–462 (GSVVLLMMVAVVIMCLVSIIL) form a helical membrane-spanning segment. The Extracellular portion of the chain corresponds to 463–492 (YRAVMAIIVSKSNNAFLSAWASRIASLTGS). A helical transmembrane segment spans residues 493–513 (VVNLVFILILSKVYVILAQVL). Topologically, residues 514 to 530 (TRWEMHRTQTAFEDAFT) are cytoplasmic. A helical transmembrane segment spans residues 531-551 (LKVFIFQFVNFYASPVYIAFF). Residues 552–652 (KGRFVGYPGN…FHEYLEMVLQ (101 aa)) lie on the Extracellular side of the membrane. The helical transmembrane segment at 653-673 (FGFVTIFVAACPLAPLFALLN) threads the bilayer. The Cytoplasmic portion of the chain corresponds to 674–701 (NWVEIRLDARKFVCEYRRPVAERAQDIG). A helical membrane pass occupies residues 702–722 (IWFHILAGLTHLAVISNAFLL). Topologically, residues 723–779 (AFSSDFLPRVYYSWTRAPDLRGFLNFTLARAPPTFTSAHNRTCRYRAFRDDDGHYSP) are extracellular. 2 N-linked (GlcNAc...) asparagine glycosylation sites follow: Asn-747 and Asn-762. The helical transmembrane segment at 780 to 800 (TYWTLLAIRLAFVIVFEHVVF) threads the bilayer. Over 801 to 860 (STGRFLDLLVPDIPESVEIKVKREYYLAKQALADNEALLGATGVKGEQPPSSEPSLGLPA) the chain is Cytoplasmic.

The protein belongs to the anoctamin family.

The protein resides in the cell membrane. Its subcellular location is the endoplasmic reticulum. The enzyme catalyses a 1,2-diacyl-sn-glycero-3-phospho-L-serine(in) = a 1,2-diacyl-sn-glycero-3-phospho-L-serine(out). It catalyses the reaction a beta-D-galactosyl-(1&lt;-&gt;1')-N-acylsphing-4-enine(out) = a beta-D-galactosyl-(1&lt;-&gt;1')-N-acylsphing-4-enine(in). The catalysed reaction is a 1,2-diacyl-sn-glycero-3-phosphocholine(in) = a 1,2-diacyl-sn-glycero-3-phosphocholine(out). Its function is as follows. Has calcium-dependent phospholipid scramblase activity; scrambles phosphatidylserine, phosphatidylcholine and galactosylceramide. Does not exhibit calcium-activated chloride channel (CaCC) activity. May play a role in cell-cell interactions. The polypeptide is Anoctamin-7 (Ano7) (Rattus norvegicus (Rat)).